A 357-amino-acid polypeptide reads, in one-letter code: Sulfate/thiosulfate import ATP-binding protein CysA (357 aa).

Residues 3 to 237 (IQIQGVSKQY…PASPFVYDFL (235 aa)) form the ABC transporter domain. 35–42 (GPSGSGKT) is a binding site for ATP.

It belongs to the ABC transporter superfamily. Sulfate/tungstate importer (TC 3.A.1.6) family. In terms of assembly, the complex is composed of two ATP-binding proteins (CysA), two transmembrane proteins (CysT and CysW) and a solute-binding protein (CysP).

The protein localises to the cell membrane. The enzyme catalyses sulfate(out) + ATP + H2O = sulfate(in) + ADP + phosphate + H(+). It catalyses the reaction thiosulfate(out) + ATP + H2O = thiosulfate(in) + ADP + phosphate + H(+). Its function is as follows. Part of the ABC transporter complex CysAWTP involved in sulfate/thiosulfate import. Responsible for energy coupling to the transport system. This is Sulfate/thiosulfate import ATP-binding protein CysA from Bacillus cereus (strain ATCC 14579 / DSM 31 / CCUG 7414 / JCM 2152 / NBRC 15305 / NCIMB 9373 / NCTC 2599 / NRRL B-3711).